Here is a 391-residue protein sequence, read N- to C-terminus: Xylose isomerase (391 aa).

Active-site residues include histidine 54 and aspartate 57. Positions 181, 217, 220, 245, 255, 257, and 287 each coordinate Mg(2+).

It belongs to the xylose isomerase family. In terms of assembly, homotetramer. It depends on Mg(2+) as a cofactor.

The protein resides in the cytoplasm. The catalysed reaction is alpha-D-xylose = alpha-D-xylulofuranose. Involved in D-xylose catabolism. This chain is Xylose isomerase (xylA), found in Streptomyces albus G.